A 279-amino-acid polypeptide reads, in one-letter code: Topoisomerase I damage affected protein 4 (279 aa).

At 1 to 32 (MNANSTTTAIGLTSPFEKLSFFPHSSNLILAH) the chain is on the extracellular side. A helical membrane pass occupies residues 33–53 (LHEIIFSFVFYQLAFSVVAPF). At 54-79 (LNKVVFRKHYTTIRDPLLKIDFNVHT) the chain is on the cytoplasmic side. Residues 70–271 (LLKIDFNVHT…MIRIAKKLAK (202 aa)) form the TLC domain. A helical transmembrane segment spans residues 80-100 (VSMIQAVVSNTVLLPTLTTPM). Topologically, residues 101–110 (HYNVVTYTDS) are extracellular. The chain crosses the membrane as a helical span at residues 111 to 131 (YSSMVSSLSAGYFIWDLTMCV). The Cytoplasmic portion of the chain corresponds to 132-135 (RYFK). Residues 136 to 156 (LYGLEFTGHAIGSVYVMLLSL) traverse the membrane as a helical segment. Over 157–162 (RPFCQP) the chain is Extracellular. Residues 163–183 (WIGRFLIYEASTPFVNINWFI) traverse the membrane as a helical segment. Residues 184–192 (MQCNAKSKN) lie on the Cytoplasmic side of the membrane. The helical transmembrane segment at 193–213 (SIPLWFNVVNGLLLMTVFFVV) threads the bilayer. Residues 214–238 (RICWGSIASALLFRQMWKVRDELPK) lie on the Extracellular side of the membrane. A helical membrane pass occupies residues 239 to 259 (FSAVTMMSLNIFMNLLNVLWF). The Cytoplasmic portion of the chain corresponds to 260 to 279 (KKMIRIAKKLAKPAPTSKLD).

Belongs to the TMEM56 family.

The protein resides in the membrane. The sequence is that of Topoisomerase I damage affected protein 4 (TDA4) from Saccharomyces cerevisiae (strain ATCC 204508 / S288c) (Baker's yeast).